A 250-amino-acid chain; its full sequence is MNSSYHRRVPVLGELGTSTSSQLPSTWPSILIPLGSTEQHGPHLPLDTDTRIATAVGRAVATRMHGRLTQCQPGWLLAPPIAYGASGEHQSFAGTISIGAEALRVLLLEYGRSAACWADRLVFVNGHGGNVEALRGAVRQLRAEGRDAGWSACGSAGGDAHAGHTETSVLLHISPEVVLTDRLSAGNAAPLAELLPSLRRGGVAAVSPIGVLGDPTTATAVEGRRIFAEMVDDCVSRIARWTPGPDGMLT.

5 residues coordinate a divalent metal cation: Glu38, His40, Asp49, His127, and Glu166.

It belongs to the creatininase superfamily. As to quaternary structure, homooctamer. The cofactor is Fe(2+). Zn(2+) is required as a cofactor.

The catalysed reaction is [mycofactocin precursor peptide]-C-terminal glycyl-N-{5-[(4-hydroxyphenyl)methyl]-4,4-dimethyl-2-oxopyrrolidin-3-yl}acetamide + H2O = [mycofactocin precursor peptide]-C-terminal glycine + 3-amino-5-[(4-hydroxyphenyl)methyl]-4,4-dimethyl-2-pyrrolidin-2-one. Its function is as follows. Peptidase involved in the biosynthesis of the enzyme cofactor mycofactocin (MFT). Catalyzes cleavage of the MftC-modified MftA peptide to liberate its final two residues, which consist of a cross-linked valine-decarboxylated tyrosine dipeptide (named 3-amino-5-[(4-hydroxyphenyl)methyl]-4,4-dimethyl-2-pyrrolidin-2-one or ADHP). This chain is Mycofactocin precursor peptide peptidase, found in Mycobacterium ulcerans (strain Agy99).